The sequence spans 353 residues: Carbamoyl phosphate synthase arginine-specific small chain (353 aa).

Residues 1–162 (MEGYLVLEDG…EISTFGDGNK (162 aa)) are CPSase. L-glutamine is bound by residues Ser-44, Gly-210, and Gly-212. The Glutamine amidotransferase type-1 domain occupies 163–349 (HIALIDFGYK…LKNVIPARRE (187 aa)). Cys-237 serves as the catalytic Nucleophile. Residues Leu-238, Gln-241, Asn-279, and Tyr-282 each contribute to the L-glutamine site. Catalysis depends on residues His-322 and Glu-324.

The protein belongs to the CarA family. As to quaternary structure, composed of two chains; the small (or glutamine) chain promotes the hydrolysis of glutamine to ammonia, which is used by the large (or ammonia) chain to synthesize carbamoyl phosphate. Tetramer of heterodimers (alpha,beta)4.

It carries out the reaction hydrogencarbonate + L-glutamine + 2 ATP + H2O = carbamoyl phosphate + L-glutamate + 2 ADP + phosphate + 2 H(+). The enzyme catalyses L-glutamine + H2O = L-glutamate + NH4(+). It functions in the pathway amino-acid biosynthesis; L-arginine biosynthesis; carbamoyl phosphate from bicarbonate: step 1/1. Functionally, small subunit of the glutamine-dependent carbamoyl phosphate synthetase (CPSase). CPSase catalyzes the formation of carbamoyl phosphate from the ammonia moiety of glutamine, carbonate, and phosphate donated by ATP, constituting the first step of the biosynthetic pathway leading to arginine and/or urea. The small subunit (glutamine amidotransferase) binds and cleaves glutamine to supply the large subunit with the substrate ammonia. The protein is Carbamoyl phosphate synthase arginine-specific small chain of Bacillus subtilis (strain 168).